Consider the following 877-residue polypeptide: Probable alpha/beta-glucosidase agdC (877 aa).

A signal peptide spans 1-14 (MLGSLLLLAPLAGA). Asn171, Asn293, and Asn373 each carry an N-linked (GlcNAc...) asparagine glycan. Asp422 (nucleophile) is an active-site residue. Glu425 is a catalytic residue. The segment at 432–476 (DPCTDPERYSSENNLPPAPPPVRSSSPRPLPGFPADFQPSSASRS) is disordered. Pro residues predominate over residues 447–463 (PPAPPPVRSSSPRPLPG). N-linked (GlcNAc...) asparagine glycosylation is present at Asn508. The active-site Proton donor is the Asp573. Asn574, Asn610, and Asn744 each carry an N-linked (GlcNAc...) asparagine glycan.

The protein belongs to the glycosyl hydrolase 31 family.

It localises to the secreted. It catalyses the reaction Hydrolysis of terminal, non-reducing (1-&gt;4)-linked alpha-D-glucose residues with release of alpha-D-glucose.. It carries out the reaction Hydrolysis of terminal, non-reducing beta-D-glucosyl residues with release of beta-D-glucose.. In terms of biological role, glucosidase involved in the degradation of cellulosic biomass. Has both alpha- and beta-glucosidase activity. This chain is Probable alpha/beta-glucosidase agdC (agdC), found in Aspergillus oryzae (strain ATCC 42149 / RIB 40) (Yellow koji mold).